We begin with the raw amino-acid sequence, 165 residues long: NADPH-dependent 7-cyano-7-deazaguanine reductase (165 aa).

Residue cysteine 56 is the Thioimide intermediate of the active site. Aspartate 63 functions as the Proton donor in the catalytic mechanism. Substrate is bound by residues 78–80 (VES) and 97–98 (HE).

This sequence belongs to the GTP cyclohydrolase I family. QueF type 1 subfamily.

It is found in the cytoplasm. The catalysed reaction is 7-aminomethyl-7-carbaguanine + 2 NADP(+) = 7-cyano-7-deazaguanine + 2 NADPH + 3 H(+). The protein operates within tRNA modification; tRNA-queuosine biosynthesis. Its activity is regulated as follows. Is totally inhibited by 4-aminobenzylcyanide in vitro. Its function is as follows. Catalyzes the NADPH-dependent reduction of 7-cyano-7-deazaguanine (preQ0) to 7-aminomethyl-7-deazaguanine (preQ1), a late step in the queuosine pathway. Is highly specific for its natural substrate preQ0, since it cannot use various aliphatic, aromatic and heterocyclic nitriles, although it can reduce the substrate analog 5-cyanopyrrolo[2,3-d]pyrimidin-4-one with lesser efficiency. The chain is NADPH-dependent 7-cyano-7-deazaguanine reductase from Geobacillus kaustophilus (strain HTA426).